We begin with the raw amino-acid sequence, 235 residues long: 7-cyano-7-deazaguanine synthase (235 aa).

Position 7-17 (7-17) interacts with ATP; the sequence is CSGGLDSVSLA. Positions 185, 193, 196, and 199 each coordinate Zn(2+).

The protein belongs to the QueC family. The cofactor is Zn(2+).

It catalyses the reaction 7-carboxy-7-deazaguanine + NH4(+) + ATP = 7-cyano-7-deazaguanine + ADP + phosphate + H2O + H(+). It functions in the pathway purine metabolism; 7-cyano-7-deazaguanine biosynthesis. In terms of biological role, catalyzes the ATP-dependent conversion of 7-carboxy-7-deazaguanine (CDG) to 7-cyano-7-deazaguanine (preQ(0)). The sequence is that of 7-cyano-7-deazaguanine synthase from Allorhizobium ampelinum (strain ATCC BAA-846 / DSM 112012 / S4) (Agrobacterium vitis (strain S4)).